The primary structure comprises 278 residues: MDTELLKTFLEVSRTRHFGRAAEALYLTQSAVSFRIRQLENQLGVNLFTRHRNNIRLTTAGEKLLPYAETLMNTWQAARKEVAHTSRHNEFSIGASASLWECMLNAWLGRLYQLQEPQSGLQFEARIAQRQSLVKQLHERQLDLLITTEAPKMDEFSSQLLGHFTLALYCSSPARKKSELNYLRLEWGPDFQQHETGLIAADEVPVLTTSSAELARQQLSALNGCSWLPVNWANEKGGLHTVADSATLSRPLYAIWLQNSDKYSLICDLLKTDVLDGQ.

The 58-residue stretch at 1-58 (MDTELLKTFLEVSRTRHFGRAAEALYLTQSAVSFRIRQLENQLGVNLFTRHRNNIRLT) folds into the HTH lysR-type domain. A DNA-binding region (H-T-H motif) is located at residues 18 to 37 (FGRAAEALYLTQSAVSFRIR).

The protein belongs to the LysR transcriptional regulatory family.

In terms of biological role, negatively regulates the transcription of the flagellar master operon flhDC by binding to the upstream region of the operon. The chain is HTH-type transcriptional regulator HdfR from Salmonella newport (strain SL254).